A 347-amino-acid chain; its full sequence is Ubiquitin thioesterase Otu1 (347 aa).

Positions 5–87 constitute a Ubiquitin-like domain; it reads FSVKLKSKKG…LIVEEKAAPA (83 aa). The segment at 8-89 is UBX-like; sequence KLKSKKGQFI…VEEKAAPAPA (82 aa). Residues 150–274 form the OTU domain; it reads LLKKVVPADN…GIHYDPLYME (125 aa). Positions 155-161 are cys-loop; that stretch reads VPADNSC. Residue D158 is part of the active site. C161 functions as the Nucleophile in the catalytic mechanism. Residues 213-223 are variable-loop; the sequence is IQKADSWGGAI. A his-loop region spans residues 263–267; that stretch reads FDGIH. I266 lines the substrate pocket. Residue H267 is part of the active site. Positions 290-295 are S2 site; it reads LGVYQQ. The segment at 317–341 adopts a C2H2-type zinc-finger fold; that stretch reads LRCMQCDVRLVGQVQAQEHAKQTGH. Residue H341 is part of the active site.

The catalysed reaction is Thiol-dependent hydrolysis of ester, thioester, amide, peptide and isopeptide bonds formed by the C-terminal Gly of ubiquitin (a 76-residue protein attached to proteins as an intracellular targeting signal).. Hydrolase that can remove conjugated ubiquitin from proteins and may therefore play an important regulatory role at the level of protein turnover by preventing degradation. Involved in the regulation of DNA damage repair. The polypeptide is Ubiquitin thioesterase Otu1 (Drosophila melanogaster (Fruit fly)).